The chain runs to 418 residues: Gamma-glutamyl phosphate reductase (418 aa).

It belongs to the gamma-glutamyl phosphate reductase family.

It localises to the cytoplasm. The catalysed reaction is L-glutamate 5-semialdehyde + phosphate + NADP(+) = L-glutamyl 5-phosphate + NADPH + H(+). The protein operates within amino-acid biosynthesis; L-proline biosynthesis; L-glutamate 5-semialdehyde from L-glutamate: step 2/2. In terms of biological role, catalyzes the NADPH-dependent reduction of L-glutamate 5-phosphate into L-glutamate 5-semialdehyde and phosphate. The product spontaneously undergoes cyclization to form 1-pyrroline-5-carboxylate. The polypeptide is Gamma-glutamyl phosphate reductase (Syntrophotalea carbinolica (strain DSM 2380 / NBRC 103641 / GraBd1) (Pelobacter carbinolicus)).